The chain runs to 86 residues: MAHKKGVGSSRNGRDSNPKYLGVKIFGGQAIDAGNIIVRQRGTQFHPGAGVGLGRDHTLFALVDGKVEFSVKGVKKRRTVSVVAEA.

It belongs to the bacterial ribosomal protein bL27 family.

The protein is Large ribosomal subunit protein bL27 of Xanthomonas oryzae pv. oryzae (strain PXO99A).